The primary structure comprises 379 residues: MANILNLKHLLTLALILLALATKSSTSSSSSITRVKGIYWLENPFFPPTTVDTSLFTHIFYSFLTPNNITYKLEISSSQILSLNTFTKTFKTKSPPAATLFSIGGAGSNSSLLAFIASDPPACAAFINSTIDVARTFGFDGIDLDWEFPKNTKEMNDLGEMLFQWRKAISDEGATTGRPPLLLTAAVYFAVNFSIYGEPRMYPVNSINENLDWVNVMSYELRGPRSNKTGAPSGTFDPKSNVSVVSGLLSWIHSGVVPEKLVMGMPLYGKSWKLRDPNVHGIGAPSVGSGPGVNGLMAYFQVLDFNRQKSAKVEYDVDTASVYSYSGSTWIGYDNPFTVSIKVGFAQALKLRGYFFWVAGLDTLDWKIATQASKAWKLV.

The first 26 residues, 1–26 (MANILNLKHLLTLALILLALATKSST), serve as a signal peptide directing secretion. The GH18 domain occupies 34-379 (RVKGIYWLEN…TQASKAWKLV (346 aa)). Residues N68, N109, and N128 are each glycosylated (N-linked (GlcNAc...) asparagine). E147 acts as the Proton donor in catalysis. N-linked (GlcNAc...) asparagine glycosylation is found at N192, N227, and N241.

The protein belongs to the glycosyl hydrolase 18 family. Chitinase class V subfamily.

It carries out the reaction Random endo-hydrolysis of N-acetyl-beta-D-glucosaminide (1-&gt;4)-beta-linkages in chitin and chitodextrins.. It functions in the pathway glycan degradation; chitin degradation. Possesses chitinase activity in vitro toward glycol chitin, carboxymethyl-chitin, colloidal chitin, and the chitin oligosaccharides (N-acetylglucosamine) (GlcNAc)6 and (GlcNAc)5. Hydrolyzes (GlcNAc)6 into (GlcNAc)4 and (GlcNAc)2, or two (GlcNAc)3 molecules. Has the capacity to reduce hyphal growth of the fungus Trichoderma viride in an agar-plate bioassay. The sequence is that of Class V chitinase CHIT5b from Medicago truncatula (Barrel medic).